A 998-amino-acid polypeptide reads, in one-letter code: DNA damage-induced apoptosis suppressor protein (998 aa).

Residues 815–834 (DKQQASPSCPKNIKTPSQKI) are disordered. A compositionally biased stretch (polar residues) spans 817–834 (QQASPSCPKNIKTPSQKI).

As to expression, highly expressed in colorectal and lung cancer tissues.

The protein resides in the cytoplasm. It is found in the nucleus. Functionally, may be an anti-apoptotic protein involved in DNA repair or cell survival. The polypeptide is DNA damage-induced apoptosis suppressor protein (DDIAS) (Homo sapiens (Human)).